A 209-amino-acid polypeptide reads, in one-letter code: MTKIAIIDYGMGNLRSVQKGFEKVGFEAVVTADPKVVLEAEKIVLPGVGAFRDCMRNLEQGGFVEPILRVIREGRPFLGICVGMQLLLTDSVEFGLYQGLNVIPGHVLRFPEGMREGGEELKVPHMGWNQLSIKRRPPAFAEVEDGANVYFVHSYYEMPDDESVIAATCTYGVEFCAAIWKDNIVATQFHPEKSQAVGLSILKNFGEMK.

A Glutamine amidotransferase type-1 domain is found at 3–209 (KIAIIDYGMG…SILKNFGEMK (207 aa)). The active-site Nucleophile is the Cys81. Active-site residues include His190 and Glu192.

In terms of assembly, heterodimer of HisH and HisF.

The protein localises to the cytoplasm. The enzyme catalyses 5-[(5-phospho-1-deoxy-D-ribulos-1-ylimino)methylamino]-1-(5-phospho-beta-D-ribosyl)imidazole-4-carboxamide + L-glutamine = D-erythro-1-(imidazol-4-yl)glycerol 3-phosphate + 5-amino-1-(5-phospho-beta-D-ribosyl)imidazole-4-carboxamide + L-glutamate + H(+). It carries out the reaction L-glutamine + H2O = L-glutamate + NH4(+). It functions in the pathway amino-acid biosynthesis; L-histidine biosynthesis; L-histidine from 5-phospho-alpha-D-ribose 1-diphosphate: step 5/9. Its function is as follows. IGPS catalyzes the conversion of PRFAR and glutamine to IGP, AICAR and glutamate. The HisH subunit catalyzes the hydrolysis of glutamine to glutamate and ammonia as part of the synthesis of IGP and AICAR. The resulting ammonia molecule is channeled to the active site of HisF. This chain is Imidazole glycerol phosphate synthase subunit HisH, found in Geobacter sulfurreducens (strain ATCC 51573 / DSM 12127 / PCA).